The chain runs to 428 residues: CinA-like protein (428 aa).

It belongs to the CinA family.

The protein is CinA-like protein of Mycobacterium leprae (strain TN).